A 234-amino-acid chain; its full sequence is Large ribosomal subunit protein uL1 (234 aa).

The protein belongs to the universal ribosomal protein uL1 family. Part of the 50S ribosomal subunit.

In terms of biological role, binds directly to 23S rRNA. The L1 stalk is quite mobile in the ribosome, and is involved in E site tRNA release. Its function is as follows. Protein L1 is also a translational repressor protein, it controls the translation of the L11 operon by binding to its mRNA. The polypeptide is Large ribosomal subunit protein uL1 (Salmonella arizonae (strain ATCC BAA-731 / CDC346-86 / RSK2980)).